Reading from the N-terminus, the 208-residue chain is Pyridoxine/pyridoxamine 5'-phosphate oxidase (208 aa).

FMN is bound by residues 53 to 58 (RTVLLK), 68 to 69 (YS), Lys-75, and Gln-100. Lys-58 contributes to the substrate binding site. Residues Tyr-118, Arg-122, and Ser-126 each coordinate substrate. FMN contacts are provided by residues 135–136 (QS) and Trp-180. 186–188 (RLH) lines the substrate pocket. Arg-190 provides a ligand contact to FMN.

Belongs to the pyridoxamine 5'-phosphate oxidase family. As to quaternary structure, homodimer. It depends on FMN as a cofactor.

The catalysed reaction is pyridoxamine 5'-phosphate + O2 + H2O = pyridoxal 5'-phosphate + H2O2 + NH4(+). The enzyme catalyses pyridoxine 5'-phosphate + O2 = pyridoxal 5'-phosphate + H2O2. The protein operates within cofactor metabolism; pyridoxal 5'-phosphate salvage; pyridoxal 5'-phosphate from pyridoxamine 5'-phosphate: step 1/1. It participates in cofactor metabolism; pyridoxal 5'-phosphate salvage; pyridoxal 5'-phosphate from pyridoxine 5'-phosphate: step 1/1. Catalyzes the oxidation of either pyridoxine 5'-phosphate (PNP) or pyridoxamine 5'-phosphate (PMP) into pyridoxal 5'-phosphate (PLP). The sequence is that of Pyridoxine/pyridoxamine 5'-phosphate oxidase from Xylella fastidiosa (strain Temecula1 / ATCC 700964).